Here is a 387-residue protein sequence, read N- to C-terminus: Gamma-butyrobetaine dioxygenase (387 aa).

Zn(2+) is bound by residues cysteine 38, cysteine 40, cysteine 43, and histidine 82. 3 residues coordinate Fe cation: histidine 202, aspartate 204, and histidine 347. At serine 351 the chain carries Phosphoserine.

This sequence belongs to the gamma-BBH/TMLD family. Requires Fe(2+) as cofactor. It depends on L-ascorbate as a cofactor. Expressed in the liver and in some extend in the testis and the epididymis.

It is found in the cytoplasm. It catalyses the reaction 4-(trimethylamino)butanoate + 2-oxoglutarate + O2 = carnitine + succinate + CO2. Its pathway is amine and polyamine biosynthesis; carnitine biosynthesis. Functionally, catalyzes the formation of L-carnitine from gamma-butyrobetaine. The protein is Gamma-butyrobetaine dioxygenase (Bbox1) of Rattus norvegicus (Rat).